A 157-amino-acid polypeptide reads, in one-letter code: SsrA-binding protein (157 aa).

This sequence belongs to the SmpB family.

The protein localises to the cytoplasm. In terms of biological role, required for rescue of stalled ribosomes mediated by trans-translation. Binds to transfer-messenger RNA (tmRNA), required for stable association of tmRNA with ribosomes. tmRNA and SmpB together mimic tRNA shape, replacing the anticodon stem-loop with SmpB. tmRNA is encoded by the ssrA gene; the 2 termini fold to resemble tRNA(Ala) and it encodes a 'tag peptide', a short internal open reading frame. During trans-translation Ala-aminoacylated tmRNA acts like a tRNA, entering the A-site of stalled ribosomes, displacing the stalled mRNA. The ribosome then switches to translate the ORF on the tmRNA; the nascent peptide is terminated with the 'tag peptide' encoded by the tmRNA and targeted for degradation. The ribosome is freed to recommence translation, which seems to be the essential function of trans-translation. This Limosilactobacillus reuteri (strain DSM 20016) (Lactobacillus reuteri) protein is SsrA-binding protein.